A 179-amino-acid polypeptide reads, in one-letter code: Peptide deformylase (179 aa).

Fe cation is bound by residues Cys102 and His144. Glu145 is a catalytic residue. Residue His148 coordinates Fe cation.

The protein belongs to the polypeptide deformylase family. It depends on Fe(2+) as a cofactor.

It carries out the reaction N-terminal N-formyl-L-methionyl-[peptide] + H2O = N-terminal L-methionyl-[peptide] + formate. Removes the formyl group from the N-terminal Met of newly synthesized proteins. Requires at least a dipeptide for an efficient rate of reaction. N-terminal L-methionine is a prerequisite for activity but the enzyme has broad specificity at other positions. The chain is Peptide deformylase from Wolbachia pipientis subsp. Culex pipiens (strain wPip).